A 156-amino-acid polypeptide reads, in one-letter code: Transcriptional repressor NrdR (156 aa).

A zinc finger lies at 3 to 34 (CPKCNSTQSKVVDSRHADELNAIRRRRECENC). In terms of domain architecture, ATP-cone spans 49–139 (LIVVKKDGTR…VYKEFKDVDQ (91 aa)).

Belongs to the NrdR family. Zn(2+) is required as a cofactor.

Negatively regulates transcription of bacterial ribonucleotide reductase nrd genes and operons by binding to NrdR-boxes. The chain is Transcriptional repressor NrdR from Staphylococcus aureus (strain NCTC 8325 / PS 47).